A 307-amino-acid chain; its full sequence is Homoserine kinase (307 aa).

Residue 92–102 coordinates ATP; it reads PLARGLGSSAT.

Belongs to the GHMP kinase family. Homoserine kinase subfamily.

Its subcellular location is the cytoplasm. It catalyses the reaction L-homoserine + ATP = O-phospho-L-homoserine + ADP + H(+). It functions in the pathway amino-acid biosynthesis; L-threonine biosynthesis; L-threonine from L-aspartate: step 4/5. Its function is as follows. Catalyzes the ATP-dependent phosphorylation of L-homoserine to L-homoserine phosphate. The chain is Homoserine kinase (thrB) from Microchaete diplosiphon (Fremyella diplosiphon).